The primary structure comprises 66 residues: Large ribosomal subunit protein uL29 (66 aa).

The protein belongs to the universal ribosomal protein uL29 family.

This Geobacillus kaustophilus (strain HTA426) protein is Large ribosomal subunit protein uL29.